Consider the following 157-residue polypeptide: MASNRPQLSLKGRALKYLAAREHSRAELARKLAPHAGDPAEIEAVLDDLQARGFLSEARYVASVVHRRAERFGVARIRQELLSKGTPADQMTDALDALRTTELERARELWRRRFGQPPADAREAARQNRFLMSRGFSSDVVRQVLRLADHEHDHDNT.

It belongs to the RecX family.

The protein resides in the cytoplasm. Functionally, modulates RecA activity. This is Regulatory protein RecX from Leptothrix cholodnii (strain ATCC 51168 / LMG 8142 / SP-6) (Leptothrix discophora (strain SP-6)).